The chain runs to 635 residues: Cilia- and flagella-associated protein 206 (635 aa).

It belongs to the CFAP206 family.

It is found in the cytoplasm. The protein resides in the cytoskeleton. It localises to the cilium axoneme. In terms of biological role, may regulate cilium motility through its role in the assembly of the axonemal RS2 radial spoke. The protein is Cilia- and flagella-associated protein 206 of Tetrahymena thermophila (strain SB210).